A 329-amino-acid chain; its full sequence is Ketol-acid reductoisomerase (NADP(+)) (329 aa).

One can recognise a KARI N-terminal Rossmann domain in the interval 2-181 (MKKYYESDAD…GATRAVVLET (180 aa)). Residues 25 to 28 (YGSQ), arginine 48, serine 52, and 82 to 85 (DELQ) contribute to the NADP(+) site. Histidine 107 is a catalytic residue. An NADP(+)-binding site is contributed by glycine 133. Residues 182-327 (TFREETETDL…KEVRAMMPQF (146 aa)) enclose the KARI C-terminal knotted domain. 4 residues coordinate Mg(2+): aspartate 190, glutamate 194, glutamate 226, and glutamate 230. Serine 251 serves as a coordination point for substrate.

It belongs to the ketol-acid reductoisomerase family. Mg(2+) serves as cofactor.

The catalysed reaction is (2R)-2,3-dihydroxy-3-methylbutanoate + NADP(+) = (2S)-2-acetolactate + NADPH + H(+). It carries out the reaction (2R,3R)-2,3-dihydroxy-3-methylpentanoate + NADP(+) = (S)-2-ethyl-2-hydroxy-3-oxobutanoate + NADPH + H(+). The protein operates within amino-acid biosynthesis; L-isoleucine biosynthesis; L-isoleucine from 2-oxobutanoate: step 2/4. It participates in amino-acid biosynthesis; L-valine biosynthesis; L-valine from pyruvate: step 2/4. Involved in the biosynthesis of branched-chain amino acids (BCAA). Catalyzes an alkyl-migration followed by a ketol-acid reduction of (S)-2-acetolactate (S2AL) to yield (R)-2,3-dihydroxy-isovalerate. In the isomerase reaction, S2AL is rearranged via a Mg-dependent methyl migration to produce 3-hydroxy-3-methyl-2-ketobutyrate (HMKB). In the reductase reaction, this 2-ketoacid undergoes a metal-dependent reduction by NADPH to yield (R)-2,3-dihydroxy-isovalerate. This Methanoregula boonei (strain DSM 21154 / JCM 14090 / 6A8) protein is Ketol-acid reductoisomerase (NADP(+)).